Consider the following 910-residue polypeptide: Myelin regulatory factor-like protein (910 aa).

Positions 142-405 form a DNA-binding region, NDT80; the sequence is GCSYPQQPLC…SNPGQFENDS (264 aa). The disordered stretch occupies residues 189–208; sequence RSRSSEVQDPDSEGQNRMPT. The Peptidase S74 domain occupies 451-559; the sequence is SDSRAKQNIQ…KLTNNLEERI (109 aa). Residues 543–575 are a coiled coil; the sequence is GAVKQLCKLTNNLEERIEELEIWNRKLARLKRL. Residues 628-648 form a helical membrane-spanning segment; it reads LVITLIAVMAFCALTIVALYI. Positions 661 to 682 are disordered; the sequence is LPPSNITSSQEPALLPTASSSA. Residues 663–682 show a composition bias toward polar residues; it reads PSNITSSQEPALLPTASSSA.

Belongs to the MRF family.

It is found in the membrane. In Homo sapiens (Human), this protein is Myelin regulatory factor-like protein (MYRFL).